A 504-amino-acid chain; its full sequence is Maturase K (504 aa).

The protein belongs to the intron maturase 2 family. MatK subfamily.

The protein resides in the plastid. It localises to the chloroplast. In terms of biological role, usually encoded in the trnK tRNA gene intron. Probably assists in splicing its own and other chloroplast group II introns. The polypeptide is Maturase K (Lablab purpureus (Hyacinth bean)).